A 338-amino-acid chain; its full sequence is LINE-1 retrotransposable element ORF1 protein (338 aa).

Residues 1 to 40 (MGKKQNRKTGNSKTQSASPPPKERSSSPATEQSWMENDFD) are disordered. Composition is skewed to polar residues over residues 8–17 (KTGNSKTQSA) and 26–35 (SSPATEQSWM). Residues 49-153 (RSNYSELRED…QSLQEIWDYV (105 aa)) adopt a coiled-coil conformation. Positions 157–252 (NLRLIGVPES…KGKPIRLTAD (96 aa)) are RNA recognition motif (RRM) domain. The tract at residues 253 to 317 (LSAETLQARR…TTRPALKELL (65 aa)) is C-terminal domain (CTD).

The protein belongs to the transposase 22 family. As to quaternary structure, homotrimer (via coiled coil domain). May also form larger homooligomers. May interact with DDX39A, HNRNPA1, SERBP1 and YBX1. Interacts with TEX19 and UBR2. Interacts with MOV10. Interacts with APOBEC3D; this interaction inhibits LINE-1 retrotransposition. Polyubiquitinated, probably by UBR2, which induces its degradation.

The protein resides in the nucleus. It localises to the nucleolus. The protein localises to the cytoplasm. Its subcellular location is the cytoplasmic ribonucleoprotein granule. It is found in the stress granule. Functionally, nucleic acid-binding protein which is essential for retrotransposition of LINE-1 elements in the genome. Functions as a nucleic acid chaperone binding its own transcript and therefore preferentially mobilizing the transcript from which they are encoded. This Homo sapiens (Human) protein is LINE-1 retrotransposable element ORF1 protein (L1RE1).